Consider the following 378-residue polypeptide: Ribosomal RNA large subunit methyltransferase G (378 aa).

The protein belongs to the methyltransferase superfamily. RlmG family.

It localises to the cytoplasm. The catalysed reaction is guanosine(1835) in 23S rRNA + S-adenosyl-L-methionine = N(2)-methylguanosine(1835) in 23S rRNA + S-adenosyl-L-homocysteine + H(+). Functionally, specifically methylates the guanine in position 1835 (m2G1835) of 23S rRNA. This Shigella boydii serotype 4 (strain Sb227) protein is Ribosomal RNA large subunit methyltransferase G.